The chain runs to 759 residues: Pseudocleavage protein nop-1 (759 aa).

Disordered stretches follow at residues 1–46 (MSAP…SSIF), 334–361 (KIFP…MDKK), 379–413 (LSVN…NLSQ), 440–495 (QSSR…KKER), and 732–759 (ESDG…GAKI). The segment covering 10–42 (DIHSDDRDHADHQTKKEKHWFEEKSEQNGENRR) has biased composition (basic and acidic residues). Over residues 448–465 (TGNSSISSGVGSIASGTS) the composition is skewed to low complexity. Residues 473–482 (GSRSGQSISR) show a composition bias toward polar residues. Over residues 485 to 495 (SRRDDEGKKER) the composition is skewed to basic and acidic residues. The span at 736-759 (PASSNDDFDTQSTASTSTVFGAKI) shows a compositional bias: polar residues.

The protein resides in the nucleus. It is found in the cytoplasm. The protein localises to the cell cortex. Its subcellular location is the cleavage furrow. Its function is as follows. Required for formation of the pseudocleavage furrow during the first cleavage of the embryo and also mediates aster-induced furrowing during cytokinesis. Promotes cortical recruitment of ani-1 and nmy-2 during pseudocleavage and cytokinesis and promotes the accumulation of actin at furrowing regions. Regulates establishment of embryonic cell polarity. The protein is Pseudocleavage protein nop-1 (nop-1) of Caenorhabditis elegans.